A 337-amino-acid polypeptide reads, in one-letter code: DNA-directed RNA polymerase subunit alpha (337 aa).

Residues M1–E233 are alpha N-terminal domain (alpha-NTD). The tract at residues F249–Y337 is alpha C-terminal domain (alpha-CTD).

It belongs to the RNA polymerase alpha chain family. In terms of assembly, homodimer. The RNAP catalytic core consists of 2 alpha, 1 beta, 1 beta' and 1 omega subunit. When a sigma factor is associated with the core the holoenzyme is formed, which can initiate transcription.

The enzyme catalyses RNA(n) + a ribonucleoside 5'-triphosphate = RNA(n+1) + diphosphate. DNA-dependent RNA polymerase catalyzes the transcription of DNA into RNA using the four ribonucleoside triphosphates as substrates. The sequence is that of DNA-directed RNA polymerase subunit alpha from Brucella canis (strain ATCC 23365 / NCTC 10854 / RM-666).